We begin with the raw amino-acid sequence, 411 residues long: Dual specificity protein phosphatase Mpk3 (411 aa).

The Rhodanese domain occupies 22-149; sequence DSKDLILLDC…FRQAFPEWCE (128 aa). Positions 184 to 197 are enriched in low complexity; the sequence is DSACSSSAESSDCE. Residues 184 to 209 form a disordered region; it reads DSACSSSAESSDCESSSHHHHHHSHH. A Tyrosine-protein phosphatase domain is found at 214-358; it reads APVEIIPGLL…LLSFESQLRL (145 aa). The Phosphocysteine intermediate role is filled by C302.

This sequence belongs to the protein-tyrosine phosphatase family. Non-receptor class dual specificity subfamily. As to quaternary structure, interacts (via N-terminal region) with phosphorylated rl. As to expression, ubiquitous expression in eye and wing imaginal disks. Enriched in ovary.

It localises to the cytoplasm. It catalyses the reaction O-phospho-L-tyrosyl-[protein] + H2O = L-tyrosyl-[protein] + phosphate. It carries out the reaction O-phospho-L-seryl-[protein] + H2O = L-seryl-[protein] + phosphate. The enzyme catalyses O-phospho-L-threonyl-[protein] + H2O = L-threonyl-[protein] + phosphate. With respect to regulation, activity abolished by tyrosine phosphatase inhibitor sodium vanadate. Activated by rl. In terms of biological role, negatively regulates the activity of members of the MAP kinase family in response to changes in the cellular environment. Has a specificity for the ERK family. Acts as a negative regulator in a variety of developmental processes including cell differentiation and proliferation controlled by the Ras/ERK pathway. Suppresses the photoreceptor cell differentiation and wing vein formation. Required for proper oogenesis and early embryogenesis. Functions autonomously in a subset of photoreceptor progenitor cells in eye imaginal disks. Also appears to be required in surrounding non-neuronal cells for ommatidial patterning and photoreceptor differentiation. Plays a role in the maintenance of epithelial integrity during tracheal development. The chain is Dual specificity protein phosphatase Mpk3 (Mkp3) from Drosophila melanogaster (Fruit fly).